A 173-amino-acid chain; its full sequence is Photosystem I assembly protein Ycf3 (173 aa).

TPR repeat units lie at residues 35 to 68, 72 to 105, and 120 to 153; these read AFYY…EKDP, SFIL…NPNL, and GNKL…APYN.

The protein belongs to the Ycf3 family.

Its subcellular location is the plastid. It localises to the chloroplast thylakoid membrane. Essential for the assembly of the photosystem I (PSI) complex. May act as a chaperone-like factor to guide the assembly of the PSI subunits. This is Photosystem I assembly protein Ycf3 from Cyanidium caldarium (Red alga).